The chain runs to 32 residues: Photosystem II reaction center protein Psb30 (32 aa).

The chain crosses the membrane as a helical span at residues I3 to V23.

This sequence belongs to the Psb30/Ycf12 family. PSII is composed of 1 copy each of membrane proteins PsbA, PsbB, PsbC, PsbD, PsbE, PsbF, PsbH, PsbI, PsbJ, PsbK, PsbL, PsbM, PsbT, PsbY, PsbZ, Psb30/Ycf12, peripheral proteins of the oxygen-evolving complex and a large number of cofactors. It forms dimeric complexes.

The protein resides in the plastid. Its subcellular location is the chloroplast thylakoid membrane. A core subunit of photosystem II (PSII), probably helps stabilize the reaction center. The sequence is that of Photosystem II reaction center protein Psb30 from Euglena viridis (Cercaria viridis).